The sequence spans 139 residues: Cofilin (139 aa).

Residues 4 to 135 (GVKVSQECLD…SYDTVLDKVS (132 aa)) form the ADF-H domain.

This sequence belongs to the actin-binding proteins ADF family.

The protein localises to the cytoplasm. It is found in the cytoskeleton. It localises to the nucleus matrix. Its function is as follows. Controls reversibly actin polymerization and depolymerization in a pH-sensitive manner. It has the ability to bind G- and F-actin in a 1:1 ratio of cofilin to actin. Binding to F-actin is regulated by tropomyosin. It is the major component of intranuclear and cytoplasmic actin rods. Required for accumulation of actin at the cell division site via depolymerizing actin at the cell ends. In association with myosin II has a role in the assembly of the contractile ring via severing actin filaments. Involved in the maintenance of the contractile ring once formed. In association with profilin and capping protein, has a role in the mitotic reorganization of the actin cytoskeleton. The sequence is that of Cofilin (COF1) from Mycosarcoma maydis (Corn smut fungus).